We begin with the raw amino-acid sequence, 883 residues long: MPWWSKSKDEKKKTNKESIIDAFNRKLGFASEDRSSGRSRKSRRRRDEIVSERGAISRLPSRSPSPSTRVSRCQSFAERSPAVPLPRPIVRPHVTSTDSGMNGSQRPGLDANLKPSWLPLPKPHGATSIPDNTGAEPDFATASVSSGSSVGDIPSDSLLSPLASDCENGNRTPVNISSRDQSMHSNKNSAEMFKPVPNKNRILSASPRRRPLGTHVKNLQIPQRDLVLCSAPDSLLSSPSRSPMRSFIPDQVSNHGLLISKPYSDVSLLGSGQCSSPGSGYNSGNNSIGGDMATQLFWPQSRCSPECSPVPSPRMTSPGPSSRIQSGAVTPLHPRAGGSTTGSPTRRLDDNRQQSHRLPLPPLLISNTCPFSPTYSAATSPSVPRSPARAEATVSPGSRWKKGRLLGMGSFGHVYLGFNSESGEMCAMKEVTLCSDDPKSRESAQQLGQEISVLSRLRHQNIVQYYGSETVDDKLYIYLEYVSGGSIYKLLQEYGQFGENAIRNYTQQILSGLAYLHAKNTVHRDIKGANILVDPHGRVKVADFGMAKHITAQSGPLSFKGSPYWMAPEVIKNSNGSNLAVDIWSLGCTVLEMATTKPPWSQYEGVPAMFKIGNSKELPDIPDHLSEEGKDFVRKCLQRNPANRPTAAQLLDHAFVRNVMPMERPIVSGEPAEAMNVASSTMRSLDIGHARSLPCLDSEDATNYQQKGLKHGSGFSISQSPRNMSCPISPVGSPIFHSHSPHISGRRSPSPISSPHALSGSSTPLTGCGGAIPFHHQRQTTVNFLHEGIGSSRSPGSGGNFYTNSFFQEPSRQQDRSRSSPRTPPHVFWDNNGSIQPGYNWNKDNQPVLSDHVSQQLLSEHLKLKSLDLRPGFSTPGSTNRGP.

Disordered regions lie at residues 28-193 (GFAS…AEMF), 303-364 (CSPE…PPLL), and 376-396 (SAAT…TVSP). Positions 57–72 (SRLPSRSPSPSTRVSR) are enriched in low complexity. Over residues 94 to 105 (VTSTDSGMNGSQ) the composition is skewed to polar residues. A compositionally biased stretch (low complexity) spans 143 to 165 (SVSSGSSVGDIPSDSLLSPLASD). 2 stretches are compositionally biased toward polar residues: residues 167-189 (ENGN…NKNS) and 314-328 (RMTS…QSGA). Residues 400–656 (WKKGRLLGMG…AAQLLDHAFV (257 aa)) enclose the Protein kinase domain. ATP contacts are provided by residues 406-414 (LGMGSFGHV) and Lys-429. The active-site Proton acceptor is the Asp-525. Disordered regions lie at residues 712–773 (GSGF…GAIP) and 787–838 (EGIG…IQPG). Low complexity predominate over residues 733-756 (SPIFHSHSPHISGRRSPSPISSPH).

It belongs to the protein kinase superfamily. STE Ser/Thr protein kinase family. MAP kinase kinase kinase subfamily. In terms of assembly, interacts with ASK7. Interacts with BSK12/SSP. Binds to BASL and MPK6. As to expression, expressed in roots, leaves, guard cells, stems, flowers and siliques.

The protein resides in the cytoplasm. It is found in the cell cortex. It localises to the cell membrane. It carries out the reaction L-seryl-[protein] + ATP = O-phospho-L-seryl-[protein] + ADP + H(+). It catalyses the reaction L-threonyl-[protein] + ATP = O-phospho-L-threonyl-[protein] + ADP + H(+). With respect to regulation, contains an N-terminal autoinhibitory domain. Its function is as follows. Functions in a MAP kinase cascade that acts as a molecular switch to regulate the first cell fate decisions in the zygote and the early embryo. Promotes elongation of the zygote and development of its basal daughter cell into the extra-embryonic suspensor. In stomatal development, acts downstream of the LRR receptor TMM, but upstream of the MKK4/MKK5-MPK3/MPK6 module to regulate stomatal cell fate before the guard mother cell (GMC) is specified. Plays a central role in both guard cell identity and pattern formation. This MAPK cascade also functions downstream of the ER receptor in regulating coordinated local cell proliferation, which shapes the morphology of plant organs. Upon brassinosteroid signaling, is inhibited by phosphorylation of its auto-inhibitory N-terminal domain by the GSK3-like kinase ASK7. The chain is Mitogen-activated protein kinase kinase kinase YODA from Arabidopsis thaliana (Mouse-ear cress).